The primary structure comprises 206 residues: Small ribosomal subunit protein uS4A (206 aa).

One can recognise an S4 RNA-binding domain in the interval 98–163 (MRLDNVVYRL…SERFKMFAEN (66 aa)).

Belongs to the universal ribosomal protein uS4 family. As to quaternary structure, part of the 30S ribosomal subunit. Contacts protein S5. The interaction surface between S4 and S5 is involved in control of translational fidelity.

Its function is as follows. One of the primary rRNA binding proteins, it binds directly to 16S rRNA where it nucleates assembly of the body of the 30S subunit. In terms of biological role, with S5 and S12 plays an important role in translational accuracy. The sequence is that of Small ribosomal subunit protein uS4A from Clostridium perfringens (strain ATCC 13124 / DSM 756 / JCM 1290 / NCIMB 6125 / NCTC 8237 / Type A).